Reading from the N-terminus, the 339-residue chain is Ketol-acid reductoisomerase (NADP(+)) (339 aa).

Residues 1 to 182 (MRVYYDRDAD…GGGRAGIIET (182 aa)) enclose the KARI N-terminal Rossmann domain. NADP(+) is bound by residues 24–27 (YGSQ), arginine 48, serine 51, threonine 53, and 83–86 (DELQ). The active site involves histidine 108. NADP(+) is bound at residue glycine 134. The region spanning 183 to 328 (TFREECETDL…AKLRAMMPWI (146 aa)) is the KARI C-terminal knotted domain. Aspartate 191, glutamate 195, glutamate 227, and glutamate 231 together coordinate Mg(2+). A substrate-binding site is contributed by serine 252.

The protein belongs to the ketol-acid reductoisomerase family. It depends on Mg(2+) as a cofactor.

The enzyme catalyses (2R)-2,3-dihydroxy-3-methylbutanoate + NADP(+) = (2S)-2-acetolactate + NADPH + H(+). It carries out the reaction (2R,3R)-2,3-dihydroxy-3-methylpentanoate + NADP(+) = (S)-2-ethyl-2-hydroxy-3-oxobutanoate + NADPH + H(+). The protein operates within amino-acid biosynthesis; L-isoleucine biosynthesis; L-isoleucine from 2-oxobutanoate: step 2/4. It functions in the pathway amino-acid biosynthesis; L-valine biosynthesis; L-valine from pyruvate: step 2/4. Its function is as follows. Involved in the biosynthesis of branched-chain amino acids (BCAA). Catalyzes an alkyl-migration followed by a ketol-acid reduction of (S)-2-acetolactate (S2AL) to yield (R)-2,3-dihydroxy-isovalerate. In the isomerase reaction, S2AL is rearranged via a Mg-dependent methyl migration to produce 3-hydroxy-3-methyl-2-ketobutyrate (HMKB). In the reductase reaction, this 2-ketoacid undergoes a metal-dependent reduction by NADPH to yield (R)-2,3-dihydroxy-isovalerate. This is Ketol-acid reductoisomerase (NADP(+)) from Methylocella silvestris (strain DSM 15510 / CIP 108128 / LMG 27833 / NCIMB 13906 / BL2).